The sequence spans 293 residues: Epidermal growth factor-like protein 8 (293 aa).

The signal sequence occupies residues M1–G28. The region spanning S34–A112 is the EMI domain. Cystine bridges form between C38–C97, C65–C71, C96–C110, C114–C124, C118–C130, C132–C141, C148–C159, C155–C168, and C170–C183. N50 carries N-linked (GlcNAc...) asparagine glycosylation. The EGF-like 1 domain occupies D111–H142. The region spanning D144–A184 is the EGF-like 2; calcium-binding domain. The stretch at S206–A235 forms a coiled coil.

As to expression, ubiquitously expressed in brain, kidney, thymus and lung.

It is found in the secreted. The sequence is that of Epidermal growth factor-like protein 8 (Egfl8) from Mus musculus (Mouse).